Here is a 1039-residue protein sequence, read N- to C-terminus: Error-prone DNA polymerase (1039 aa).

This sequence belongs to the DNA polymerase type-C family. DnaE2 subfamily.

It localises to the cytoplasm. It carries out the reaction DNA(n) + a 2'-deoxyribonucleoside 5'-triphosphate = DNA(n+1) + diphosphate. Functionally, DNA polymerase involved in damage-induced mutagenesis and translesion synthesis (TLS). It is not the major replicative DNA polymerase. The protein is Error-prone DNA polymerase of Idiomarina loihiensis (strain ATCC BAA-735 / DSM 15497 / L2-TR).